We begin with the raw amino-acid sequence, 337 residues long: Gastrula zinc finger protein XlCGF26.1 (337 aa).

C2H2-type zinc fingers lie at residues 6–28, 34–56, 62–84, 90–112, 118–140, 146–168, 174–196, 202–224, 230–252, 258–280, 286–309, and 315–337; these read FDCT…YKIH, FICA…SKIH, FPCT…NKIH, FTCT…VKIH, FTCT…NKIH, FTCT…FKIH, and FSCT…KRTH.

The protein belongs to the krueppel C2H2-type zinc-finger protein family.

It is found in the nucleus. May be involved in transcriptional regulation. This Xenopus laevis (African clawed frog) protein is Gastrula zinc finger protein XlCGF26.1.